Here is a 380-residue protein sequence, read N- to C-terminus: ER-phagy receptor 1 (380 aa).

The J domain occupies 9 to 74 (DCYEILQVNH…DKRKWHEKDY (66 aa)). The segment at 270 to 294 (IMCMVCNKNFRSQNQLENHENSKKH) adopts a C2H2-type zinc-finger fold. The tract at residues 307–337 (KHAKEAQKNAESNKQPEDAPSESPYSNKVSS) is disordered. Ser-344 carries the phosphoserine modification. The AIM signature appears at 352 to 355 (FTFV). The short motif at 361–367 (EFYTASE) is the FFAT element.

Interacts (via the AIM motif) with atg8. Interacts (via the FFAT motif) with the vesicle-associated membrane protein-associated protein (VAP) family proteins scs2 and scs22.

It localises to the endoplasmic reticulum. The protein localises to the preautophagosomal structure. Reticulophagy receptor required for autophagosomal sequestration of endoplasmic reticulum (ER) membranes during ER stress. Confers resistance to ER stress by promoting the autophagic degradation of the ER (ER-phagy or reticulophagy). Acts as a bridging molecule to mediate the association between atg8 on the autophagic membrane and the vesicle-associated membrane protein-associated proteins (VAPs) scs2 and scs22 on the ER. May play a role in meiosis. The sequence is that of ER-phagy receptor 1 from Schizosaccharomyces pombe (strain 972 / ATCC 24843) (Fission yeast).